The following is a 127-amino-acid chain: SH2 domain-containing protein 1A (127 aa).

In terms of domain architecture, SH2 spans 6 to 102 (VYHGKISRET…GIVIPLQYPV (97 aa)). The interaction with FYN SH3 domain stretch occupies residues 67 to 92 (ETAPGVHKRYFRKIKNLISAFQKPDQ). At K89 the chain carries N6-acetyllysine. Positions 104–127 (KSSPRSTQGTTGIREDPDVCLKAP) are disordered. The segment covering 116-127 (IREDPDVCLKAP) has biased composition (basic and acidic residues).

As to quaternary structure, interacts with CD84, CD244, LY9, SLAMF1 and FYN. Interacts with NTRK1, NTRK2 and NTRK3.

It localises to the cytoplasm. Its function is as follows. Cytoplasmic adapter regulating receptors of the signaling lymphocytic activation molecule (SLAM) family such as SLAMF1, CD244, LY9, CD84, SLAMF6 and SLAMF7. In SLAM signaling seems to cooperate with SH2D1B/EAT-2. Initially it has been proposed that association with SLAMF1 prevents SLAMF1 binding to inhibitory effectors including INPP5D/SHIP1 and PTPN11/SHP-2. However, by simultaneous interactions, recruits FYN which subsequently phosphorylates and activates SLAMF1. Positively regulates CD244/2B4- and CD84-mediated natural killer (NK) cell functions. Can also promote CD48-, SLAMF6 -, LY9-, and SLAMF7-mediated NK cell activation. In the context of NK cell-mediated cytotoxicity enhances conjugate formation with target cells. May also regulate the activity of the neurotrophin receptors NTRK1, NTRK2 and NTRK3. This chain is SH2 domain-containing protein 1A (SH2D1A), found in Saguinus oedipus (Cotton-top tamarin).